Reading from the N-terminus, the 1015-residue chain is Putative ankyrin repeat protein R96 (1015 aa).

Basic residues predominate over residues Met1–Lys14. The disordered stretch occupies residues Met1–Lys37. ANK repeat units follow at residues Asn136–Phe165, Ala168–Ile201, Asp202–Val231, Leu340–Ala370, Asn374–Ser403, Ser456–Ala485, Asn498–Leu527, and Thr535–Cys564.

The chain is Putative ankyrin repeat protein R96 from Acanthamoeba polyphaga mimivirus (APMV).